Reading from the N-terminus, the 228-residue chain is Urease accessory protein UreF (228 aa).

This sequence belongs to the UreF family. UreD, UreF and UreG form a complex that acts as a GTP-hydrolysis-dependent molecular chaperone, activating the urease apoprotein by helping to assemble the nickel containing metallocenter of UreC. The UreE protein probably delivers the nickel.

Its subcellular location is the cytoplasm. In terms of biological role, required for maturation of urease via the functional incorporation of the urease nickel metallocenter. The sequence is that of Urease accessory protein UreF from Prochlorococcus marinus (strain MIT 9312).